A 125-amino-acid polypeptide reads, in one-letter code: Cysteine proteinase inhibitor 3 (125 aa).

A signal peptide spans 1–22 (MESKTFWIVTLLLCGTIQLAIC). The 89-residue stretch at 36–124 (GGVHDLRGNQ…KQLQEFKESS (89 aa)) folds into the Cystatin domain. A Secondary area of contact motif is present at residues 80-84 (QVVAG).

This sequence belongs to the cystatin family. Phytocystatin subfamily.

The protein resides in the secreted. In terms of biological role, specific inhibitor of cysteine proteinases. Probably involved in the regulation of endogenous processes and in defense against pests and pathogens. The chain is Cysteine proteinase inhibitor 3 (CYS3) from Arabidopsis thaliana (Mouse-ear cress).